We begin with the raw amino-acid sequence, 562 residues long: Glucocorticoid modulatory element-binding protein 1 (562 aa).

A2 is modified (N-acetylalanine). An SAND domain is found at 72-156 (ASSIEGNEDM…RKMMDSGQID (85 aa)). Zn(2+) is bound at residue C103. 4 residues coordinate DNA: K129, K133, K136, and R147. H160, C164, and C168 together coordinate Zn(2+). Residues 311–355 (LDNRRKQVEQGEEQFLYTLADLERQLEEQKKQAQDPRLKSQTVQN) adopt a coiled-coil conformation. Residues 360–384 (PVSTPKPPKRPRLQRPASTTVLSPS) are disordered. The span at 375-384 (PASTTVLSPS) shows a compositional bias: polar residues.

In terms of assembly, homodimer, and heterodimer of GMEB1 and GMEB2. Interacts with TRIM63. Interacts with the glucocorticoid receptor (NR3C1) and NCOA2/TIF2. May interact with HSP27 and CREB-binding protein (CBP). Ubiquitous. Low levels were detected in heart, brain, spleen, lung, liver, skeletal muscle, kidney and testis.

It is found in the nucleus. It localises to the cytoplasm. In terms of biological role, trans-acting factor that binds to glucocorticoid modulatory elements (GME) present in the TAT (tyrosine aminotransferase) promoter and increases sensitivity to low concentrations of glucocorticoids. Also binds to the transferrin receptor promoter. The protein is Glucocorticoid modulatory element-binding protein 1 (Gmeb1) of Mus musculus (Mouse).